The sequence spans 529 residues: Endoglucanase 21 (529 aa).

An N-terminal signal peptide occupies residues 1–24 (MVAAMTMCAAVAVLLVLTSTMAAA). Catalysis depends on Asp89, which acts as the Nucleophile. N-linked (GlcNAc...) asparagine glycosylation is present at Asn342. Residues His429, Asp481, and Glu490 contribute to the active site.

It belongs to the glycosyl hydrolase 9 (cellulase E) family. In terms of tissue distribution, expressed in roots and flowers.

It is found in the secreted. The catalysed reaction is Endohydrolysis of (1-&gt;4)-beta-D-glucosidic linkages in cellulose, lichenin and cereal beta-D-glucans.. This chain is Endoglucanase 21 (GLU9), found in Oryza sativa subsp. japonica (Rice).